The following is a 132-amino-acid chain: Fatty acid-binding protein, brain (132 aa).

An N-acetylvaline modification is found at V2. Residue 127–129 (RHY) coordinates a fatty acid.

The protein belongs to the calycin superfamily. Fatty-acid binding protein (FABP) family. In terms of tissue distribution, expressed in brain and other neural tissues.

Its subcellular location is the cytoplasm. B-FABP could be involved in the transport of a so far unknown hydrophobic ligand with potential morphogenic activity during CNS development. It is required for the establishment of the radial glial fiber system in developing brain, a system that is necessary for the migration of immature neurons to establish cortical layers. This chain is Fatty acid-binding protein, brain (FABP7), found in Homo sapiens (Human).